The primary structure comprises 199 residues: Glycerol-3-phosphate acyltransferase (199 aa).

Helical transmembrane passes span 4–24, 56–76, 80–100, 115–135, and 154–176; these read FALFYMLFAYLLGSVSSAILI, LAVLIFDMLKGMIPVWAGYYL, QFELGMVALGACLGHIFPIFF, IAPISWAVAGSMFGTWIFVFL, and YVWWFKPEFTFPVALVCCLLIYR.

This sequence belongs to the PlsY family. As to quaternary structure, probably interacts with PlsX.

It localises to the cell inner membrane. It catalyses the reaction an acyl phosphate + sn-glycerol 3-phosphate = a 1-acyl-sn-glycero-3-phosphate + phosphate. Its pathway is lipid metabolism; phospholipid metabolism. In terms of biological role, catalyzes the transfer of an acyl group from acyl-phosphate (acyl-PO(4)) to glycerol-3-phosphate (G3P) to form lysophosphatidic acid (LPA). This enzyme utilizes acyl-phosphate as fatty acyl donor, but not acyl-CoA or acyl-ACP. This Haemophilus influenzae (strain PittEE) protein is Glycerol-3-phosphate acyltransferase.